The chain runs to 400 residues: Cysteine desulfurase (400 aa).

Pyridoxal 5'-phosphate contacts are provided by residues 71-72, N150, Q178, and 198-200; these read GT and SGH. The residue at position 201 (K201) is an N6-(pyridoxal phosphate)lysine. Residue T236 participates in pyridoxal 5'-phosphate binding. C324 functions as the Cysteine persulfide intermediate in the catalytic mechanism. Position 324 (C324) interacts with [2Fe-2S] cluster.

Belongs to the class-V pyridoxal-phosphate-dependent aminotransferase family. NifS/IscS subfamily. As to quaternary structure, homodimer. Pyridoxal 5'-phosphate serves as cofactor.

It carries out the reaction (sulfur carrier)-H + L-cysteine = (sulfur carrier)-SH + L-alanine. Functionally, catalyzes the removal of elemental sulfur atoms from cysteine to produce alanine. Seems to participate in the biosynthesis of the nitrogenase metalloclusters by providing the inorganic sulfur required for the Fe-S core formation. This is Cysteine desulfurase from Nostoc sp. (strain PCC 7120 / SAG 25.82 / UTEX 2576).